A 363-amino-acid chain; its full sequence is Chorismate synthase (363 aa).

Arg48 and Arg54 together coordinate NADP(+). FMN contacts are provided by residues 125 to 127 (RSS), 237 to 238 (NA), Gly277, 292 to 296 (KPTSS), and Arg318.

This sequence belongs to the chorismate synthase family. As to quaternary structure, homotetramer. FMNH2 serves as cofactor.

The enzyme catalyses 5-O-(1-carboxyvinyl)-3-phosphoshikimate = chorismate + phosphate. It participates in metabolic intermediate biosynthesis; chorismate biosynthesis; chorismate from D-erythrose 4-phosphate and phosphoenolpyruvate: step 7/7. In terms of biological role, catalyzes the anti-1,4-elimination of the C-3 phosphate and the C-6 proR hydrogen from 5-enolpyruvylshikimate-3-phosphate (EPSP) to yield chorismate, which is the branch point compound that serves as the starting substrate for the three terminal pathways of aromatic amino acid biosynthesis. This reaction introduces a second double bond into the aromatic ring system. In Pseudomonas paraeruginosa (strain DSM 24068 / PA7) (Pseudomonas aeruginosa (strain PA7)), this protein is Chorismate synthase.